The sequence spans 407 residues: Patatin-like protein 2 (407 aa).

One can recognise a PNPLA domain in the interval 22–228 (LSIDGGGIRG…AANNPALLAI (207 aa)). Positions 26-31 (GGGIRG) match the GXGXXG motif. The GXSXG signature appears at 64–68 (GTSTG). Ser-66 acts as the Nucleophile in catalysis. The active-site Proton acceptor is the Asp-215. The DGA/G motif lies at 215–217 (DGG). A Phosphoserine modification is found at Ser-398.

It belongs to the patatin family. Expressed specifically in roots.

Its subcellular location is the cytoplasm. Possesses non-specific lipolytic acyl hydrolase (LAH) activity. Catalyzes the hydrolysis of the galactolipids monogalactosyldiacylglycerol (MGDG) and digalactosyldiacylglycerol (DGDG), and less efficiently the phoshpolipids phosphatidylcholine (PC), phosphatidylethanolamine (PE), phosphatidylglycerol (PG), phosphatidic acid (PA), phosphatidylserine (PS) and phosphatidylinositol (PI). Favors the release of fatty acid at the sn-1 position for PC or PE and the sn-2 position for PG, PA, PS and PI. Negatively affects disease resistance to the necrotic fungal pathogen Botrytis cinerea and the avirulent bacteria Pseudomonas syringae by promoting cell death and reducing the efficiency of the hypersensitive response, respectively. However, PLP2 contributes to resistance to cucumber mosaic virus (CMV), an obligate parasite inducing hypersensitive response. May negatively regulate oxylipin production, possibly via participating in membrane repair that includes removal of oxidatively modified lipids. The protein is Patatin-like protein 2 (PLP2) of Arabidopsis thaliana (Mouse-ear cress).